The sequence spans 1139 residues: Exportin-T (1139 aa).

The interval 562-589 is disordered; that stretch reads ARNKLRAAQGSGRTTPSSSDNVDLGPSS. Residues 572 to 589 show a composition bias toward polar residues; sequence SGRTTPSSSDNVDLGPSS.

The protein belongs to the exportin family.

The protein resides in the nucleus. The protein localises to the cytoplasm. Functionally, tRNA nucleus export receptor which facilitates tRNA translocation across the nuclear pore complex. Involved in pre-tRNA splicing, probably by affecting the interaction of pre-tRNA with splicing endonuclease. The protein is Exportin-T (LOS1) of Cryptococcus neoformans var. neoformans serotype D (strain B-3501A) (Filobasidiella neoformans).